The following is a 572-amino-acid chain: Proline--tRNA ligase (572 aa).

This sequence belongs to the class-II aminoacyl-tRNA synthetase family. ProS type 1 subfamily. In terms of assembly, homodimer.

Its subcellular location is the cytoplasm. It carries out the reaction tRNA(Pro) + L-proline + ATP = L-prolyl-tRNA(Pro) + AMP + diphosphate. In terms of biological role, catalyzes the attachment of proline to tRNA(Pro) in a two-step reaction: proline is first activated by ATP to form Pro-AMP and then transferred to the acceptor end of tRNA(Pro). As ProRS can inadvertently accommodate and process non-cognate amino acids such as alanine and cysteine, to avoid such errors it has two additional distinct editing activities against alanine. One activity is designated as 'pretransfer' editing and involves the tRNA(Pro)-independent hydrolysis of activated Ala-AMP. The other activity is designated 'posttransfer' editing and involves deacylation of mischarged Ala-tRNA(Pro). The misacylated Cys-tRNA(Pro) is not edited by ProRS. This Enterococcus faecalis (strain ATCC 700802 / V583) protein is Proline--tRNA ligase.